The primary structure comprises 370 residues: MSEVTHRTKTRPVKVGPLTIGGNNEVVIQSMATTKTHDVEATVAEIKRLEEAGCQIVRVACPDERAANAIADIKKQINIPLVVDIHFDYKLALKAIEAGADKIRINPGNIGRREKVEAVVKAAKEKGIPIRIGVNAGSLEKKILDKYGYPTADGMVESALHHIKILEDLDFHDIIVSMKASDVNLAIEAYEKAAKAFDYPLHLGITESGTLFAGTVKSAAGLGAILNMGIGNTLRISLSADPVEEVKVARELLKSFGLAANAATLISCPTCGRIEIDLISIANEVEEYISTIKAPIKVAVLGCAVNGPGEAREADIGIAGARGEGLLFRKGEIVRKVPEETMVEELKKEIDKIAEEHYAKMEAEKAKANA.

[4Fe-4S] cluster contacts are provided by Cys-268, Cys-271, Cys-303, and Glu-310.

It belongs to the IspG family. It depends on [4Fe-4S] cluster as a cofactor.

It catalyses the reaction (2E)-4-hydroxy-3-methylbut-2-enyl diphosphate + oxidized [flavodoxin] + H2O + 2 H(+) = 2-C-methyl-D-erythritol 2,4-cyclic diphosphate + reduced [flavodoxin]. The protein operates within isoprenoid biosynthesis; isopentenyl diphosphate biosynthesis via DXP pathway; isopentenyl diphosphate from 1-deoxy-D-xylulose 5-phosphate: step 5/6. Its function is as follows. Converts 2C-methyl-D-erythritol 2,4-cyclodiphosphate (ME-2,4cPP) into 1-hydroxy-2-methyl-2-(E)-butenyl 4-diphosphate. The polypeptide is 4-hydroxy-3-methylbut-2-en-1-yl diphosphate synthase (flavodoxin) (Bacillus pumilus (strain SAFR-032)).